Reading from the N-terminus, the 260-residue chain is Dolichol-phosphate mannosyltransferase subunit 1 (260 aa).

The disordered stretch occupies residues 1 to 25; that stretch reads MASTGASRSLAASPRPPQGRSSRQD. Alanine 2 is modified (N-acetylalanine). Phosphoserine occurs at positions 3 and 9. GDP-alpha-D-mannose is bound by residues proline 32, tyrosine 34, glutamate 36, isoleucine 63, aspartate 65, aspartate 118, alanine 119, aspartate 120, arginine 147, arginine 234, and lysine 240. A Mg(2+)-binding site is contributed by aspartate 120. Aspartate 120 is a Mn(2+) binding site.

This sequence belongs to the glycosyltransferase 2 family. As to quaternary structure, component of the dolichol-phosphate mannose (DPM) synthase complex composed of DPM1, DPM2 and DPM3; within the complex, directly interacts with DPM3. This interaction may stabilize DPM1. Mg(2+) is required as a cofactor. Requires Mn(2+) as cofactor. The cofactor is Ca(2+).

It localises to the endoplasmic reticulum. The enzyme catalyses a di-trans,poly-cis-dolichyl phosphate + GDP-alpha-D-mannose = a di-trans,poly-cis-dolichyl beta-D-mannosyl phosphate + GDP. Its pathway is protein modification; protein glycosylation. In terms of biological role, transfers mannose from GDP-mannose to dolichol monophosphate to form dolichol phosphate mannose (Dol-P-Man) which is the mannosyl donor in pathways leading to N-glycosylation, glycosyl phosphatidylinositol membrane anchoring, and O-mannosylation of proteins; catalytic subunit of the dolichol-phosphate mannose (DPM) synthase complex. This is Dolichol-phosphate mannosyltransferase subunit 1 (Dpm1) from Mus musculus (Mouse).